A 411-amino-acid polypeptide reads, in one-letter code: AT-hook motif nuclear-localized protein 14 (411 aa).

4 disordered regions span residues 1-32, 54-164, 289-348, and 366-411; these read MDPN…QRLT, ASTG…LGSV, KDAA…HQAG, and THSR…QIPD. Residues 7–19 show a composition bias toward basic residues; that stretch reads HHHHQQQQLHHLH. Low complexity predominate over residues 20–29; sequence QQQQQQQQQQ. Residues 54–66 are compositionally biased toward polar residues; that stretch reads ASTGNAVPSSNNG. The Bipartite nuclear localization signal motif lies at 105–113; it reads KRKRGRPRK. The a.T hook DNA-binding region spans 105–117; sequence KRKRGRPRKYVTP. 2 stretches are compositionally biased toward low complexity: residues 120–135 and 144–159; these read ALAA…SSSA and VTGG…SKKS. A PPC domain is found at 165-305; it reads GKTGQCFTPH…GKGDASNSGS (141 aa). The segment covering 306–315 has biased composition (polar residues); the sequence is RLTSPVSSGQ. Positions 374-390 are enriched in gly residues; it reads RGGGNSGHDGRGGGGYD.

Its subcellular location is the nucleus. Functionally, transcription factor that specifically binds AT-rich DNA sequences related to the nuclear matrix attachment regions (MARs). The sequence is that of AT-hook motif nuclear-localized protein 14 from Arabidopsis thaliana (Mouse-ear cress).